A 622-amino-acid chain; its full sequence is Probable methionine--tRNA ligase, mitochondrial (622 aa).

The 'HIGH' region signature appears at 67–79; that stretch reads PIFYVNASPHVGH. A 'KMSKS' region motif is present at residues 366 to 370; it reads KMSKS. Lys-369 contacts ATP. The disordered stretch occupies residues 592–622; the sequence is LDDIKGMGPDAGSKKHSSGNKPSSGNKKPTA. Positions 610 to 622 are enriched in low complexity; the sequence is GNKPSSGNKKPTA.

It belongs to the class-I aminoacyl-tRNA synthetase family.

It localises to the mitochondrion matrix. The catalysed reaction is tRNA(Met) + L-methionine + ATP = L-methionyl-tRNA(Met) + AMP + diphosphate. This is Probable methionine--tRNA ligase, mitochondrial from Neurospora crassa (strain ATCC 24698 / 74-OR23-1A / CBS 708.71 / DSM 1257 / FGSC 987).